The chain runs to 335 residues: ATP-dependent 6-phosphofructokinase (335 aa).

Residue Gly-11 participates in ATP binding. 21 to 25 contributes to the ADP binding site; it reads RAVVR. ATP is bound by residues 72–73 and 102–105; these read RY and GDGS. Asp-103 serves as a coordination point for Mg(2+). 125 to 127 serves as a coordination point for substrate; that stretch reads TID. The Proton acceptor role is filled by Asp-127. Residue Arg-154 coordinates ADP. Substrate-binding positions include Arg-162 and 169-171; that span reads MGR. ADP contacts are provided by residues 185–187 and 213–215; these read GAD and KKH. Substrate contacts are provided by residues Glu-222, Arg-244, and 250 to 253; that span reads HIQR.

It belongs to the phosphofructokinase type A (PFKA) family. ATP-dependent PFK group I subfamily. Prokaryotic clade 'B1' sub-subfamily. Homotetramer. Requires Mg(2+) as cofactor.

The protein localises to the cytoplasm. It carries out the reaction beta-D-fructose 6-phosphate + ATP = beta-D-fructose 1,6-bisphosphate + ADP + H(+). Its pathway is carbohydrate degradation; glycolysis; D-glyceraldehyde 3-phosphate and glycerone phosphate from D-glucose: step 3/4. With respect to regulation, allosterically activated by ADP and other diphosphonucleosides, and allosterically inhibited by phosphoenolpyruvate. Catalyzes the phosphorylation of D-fructose 6-phosphate to fructose 1,6-bisphosphate by ATP, the first committing step of glycolysis. This Streptococcus pneumoniae serotype 4 (strain ATCC BAA-334 / TIGR4) protein is ATP-dependent 6-phosphofructokinase.